The primary structure comprises 454 residues: Guanine deaminase (454 aa).

2 residues coordinate Zn(2+): H82 and H84. Residues 84 to 87, 213 to 214, 240 to 243, and D330 contribute to the substrate site; these read HAPQ, RF, and HISE. Zn(2+) contacts are provided by H240 and D330. Position 453 is a phosphoserine (S453).

This sequence belongs to the metallo-dependent hydrolases superfamily. ATZ/TRZ family. Homodimer. It depends on Zn(2+) as a cofactor.

The catalysed reaction is guanine + H2O + H(+) = xanthine + NH4(+). It participates in purine metabolism; guanine degradation; xanthine from guanine: step 1/1. Catalyzes the hydrolytic deamination of guanine, producing xanthine and ammonia. The chain is Guanine deaminase from Mus musculus (Mouse).